Here is a 456-residue protein sequence, read N- to C-terminus: tRNA-2-methylthio-N(6)-dimethylallyladenosine synthase (456 aa).

The MTTase N-terminal domain maps to 6–123 (KHVYIETYGC…LPNLIEEAQR (118 aa)). Cys15, Cys52, Cys86, Cys160, Cys164, and Cys167 together coordinate [4Fe-4S] cluster. Positions 146–380 (RAEGPTAYVS…RILEMAASIS (235 aa)) constitute a Radical SAM core domain. The region spanning 381–444 (EAMVGTEQWV…KNSLRGRLIE (64 aa)) is the TRAM domain.

It belongs to the methylthiotransferase family. MiaB subfamily. As to quaternary structure, monomer. [4Fe-4S] cluster serves as cofactor.

The protein localises to the cytoplasm. The enzyme catalyses N(6)-dimethylallyladenosine(37) in tRNA + (sulfur carrier)-SH + AH2 + 2 S-adenosyl-L-methionine = 2-methylsulfanyl-N(6)-dimethylallyladenosine(37) in tRNA + (sulfur carrier)-H + 5'-deoxyadenosine + L-methionine + A + S-adenosyl-L-homocysteine + 2 H(+). Its function is as follows. Catalyzes the methylthiolation of N6-(dimethylallyl)adenosine (i(6)A), leading to the formation of 2-methylthio-N6-(dimethylallyl)adenosine (ms(2)i(6)A) at position 37 in tRNAs that read codons beginning with uridine. This chain is tRNA-2-methylthio-N(6)-dimethylallyladenosine synthase, found in Dichelobacter nodosus (strain VCS1703A).